The primary structure comprises 353 residues: Mitochondrial glutathione transporter SLC25A40 (353 aa).

Solcar repeat units lie at residues 14-132 (ITPF…LFAL), 140-224 (RSDL…GKWW), and 234-328 (PTVA…GKAF). The next 6 helical transmembrane spans lie at 20 to 40 (MMAS…LDVV), 104 to 124 (LWSG…IYFT), 143 to 163 (LAPL…ISPL), 200 to 221 (WGPT…YEKG), 237 to 257 (AITF…TLPF), and 299 to 319 (GLFA…AIMI).

Belongs to the mitochondrial carrier (TC 2.A.29) family.

It localises to the mitochondrion inner membrane. The enzyme catalyses glutathione(in) = glutathione(out). Functionally, probable mitochondrial transporter required for glutathione import into mitochondria. Glutathione, which plays key roles in oxidative metabolism, is produced exclusively in the cytosol and is imported in many organelles. Mitochondrial glutathione is required for the activity and stability of proteins containing iron-sulfur clusters. This chain is Mitochondrial glutathione transporter SLC25A40, found in Danio rerio (Zebrafish).